A 199-amino-acid chain; its full sequence is Potassium-transporting ATPase KdpC subunit 2 (199 aa).

A helical membrane pass occupies residues 13 to 33; the sequence is ITLIFWLVTAIIYPLAILVVG.

It belongs to the KdpC family. The system is composed of three essential subunits: KdpA, KdpB and KdpC.

It localises to the cell inner membrane. Its function is as follows. Part of the high-affinity ATP-driven potassium transport (or Kdp) system, which catalyzes the hydrolysis of ATP coupled with the electrogenic transport of potassium into the cytoplasm. This subunit acts as a catalytic chaperone that increases the ATP-binding affinity of the ATP-hydrolyzing subunit KdpB by the formation of a transient KdpB/KdpC/ATP ternary complex. The polypeptide is Potassium-transporting ATPase KdpC subunit 2 (Nostoc sp. (strain PCC 7120 / SAG 25.82 / UTEX 2576)).